The sequence spans 306 residues: Non-specific ribonucleoside hydrolase RihC (306 aa).

Histidine 235 is a catalytic residue.

This sequence belongs to the IUNH family. RihC subfamily.

In terms of biological role, hydrolyzes both purine and pyrimidine ribonucleosides with a broad-substrate specificity. This chain is Non-specific ribonucleoside hydrolase RihC, found in Salmonella heidelberg (strain SL476).